Here is a 453-residue protein sequence, read N- to C-terminus: Exodeoxyribonuclease 7 large subunit (453 aa).

Belongs to the XseA family. In terms of assembly, heterooligomer composed of large and small subunits.

It is found in the cytoplasm. The catalysed reaction is Exonucleolytic cleavage in either 5'- to 3'- or 3'- to 5'-direction to yield nucleoside 5'-phosphates.. In terms of biological role, bidirectionally degrades single-stranded DNA into large acid-insoluble oligonucleotides, which are then degraded further into small acid-soluble oligonucleotides. In Geobacter metallireducens (strain ATCC 53774 / DSM 7210 / GS-15), this protein is Exodeoxyribonuclease 7 large subunit.